We begin with the raw amino-acid sequence, 510 residues long: Global transcription regulator sge1 (510 aa).

Disordered regions lie at residues 94 to 152, 393 to 438, and 469 to 510; these read PPGE…ASRN, HPFM…QQHS, and LGGT…MGRL. Positions 123-143 are enriched in low complexity; sequence NTGMNGTATGANAANLSSAGS. 2 stretches are compositionally biased toward polar residues: residues 471–480 and 501–510; these read GTNTDQSQPF and PGSNNSMGRL.

Belongs to the MIT1/WOR1 family.

The protein localises to the nucleus. Its function is as follows. Global transcriptional regulator of pathogenicity. Differentially regulates expression of effector genes. Also required for radial growth and production of asexual conidiospores, and plays a role in mycelium pigmentation. Not required for induction of Ave1, the effector that activates resistance mediated by the Ve1 immune receptor in tomato. This Verticillium dahliae (strain VdLs.17 / ATCC MYA-4575 / FGSC 10137) (Verticillium wilt) protein is Global transcription regulator sge1.